We begin with the raw amino-acid sequence, 570 residues long: MEDDKDIYTKDGTLDIHKKPANKNKTGTWKACRFILGTECCERLAYYGMSTNLINYLEKQMNMENVSASKSVSNWSGTCYATPLIGAFIADAYLGRYWTIASFVVIYIAGMTLLTISASVPGLTPTCSGETCHATAGQTAITFIALYLIALGTGGIKPCVSSFGADQFDDTDEKEKESKSSFFNWFYFVINVGAMIASSVLVWIQMNVGWGWGLGVPTVAMAIAVVFFFAGSNFYRLQKPGGSPLTRMLQVIVASCRKSKVKIPEDESLLYENQDAESSIIGSRKLEHTKILTFFDKAAVETESDNKGAAKSSSWKLCTVTQVEELKALIRLLPIWATGIVFASVYSQMGTVFVLQGNTLDQHMGPNFKIPSASLSLFDTLSVLFWAPVYDKLIVPFARKYTGHERGFTQLQRIGIGLVISIFSMVSAGILEVARLNYVQTHNLYNEETIPMTIFWQVPQYFLVGCAEVFTFIGQLEFFYDQAPDAMRSLCSALSLTAIAFGNYLSTFLVTLVTKVTRSGGRPGWIAKNLNNGHLDYFFWLLAGLSFLNFLVYLWIAKWYTYKKTTGHAL.

Position 99 is a phosphothreonine (Thr99). Transmembrane regions (helical) follow at residues 100 to 120, 136 to 156, 182 to 202, 210 to 230, 335 to 355, 370 to 390, 414 to 434, 454 to 474, 493 to 513, and 537 to 557; these read IASF…SASV, AGQT…TGGI, FFNW…SVLV, WGWG…FFFA, IWAT…VFVL, IPSA…APVY, IGIG…LEVA, IFWQ…TFIG, ALSL…VTLV, and YFFW…LWIA.

The protein belongs to the major facilitator superfamily. Proton-dependent oligopeptide transporter (POT/PTR) (TC 2.A.17) family. Expressed in developing and germinating pollen grains and ovules.

The protein resides in the cell membrane. Its function is as follows. Peptide transporter. Mediates the transport of di- and tripeptides. High affinity transporter. Involved in the uptake of peptides during pollen germination and tube growth. The sequence is that of Protein NRT1/ PTR FAMILY 8.2 (NPF8.2) from Arabidopsis thaliana (Mouse-ear cress).